We begin with the raw amino-acid sequence, 369 residues long: Uroporphyrinogen decarboxylase (369 aa).

The segment at 1–26 (MPVLHVDARPGSGPGGVSPPPSGAAL) is disordered. Substrate is bound by residues 56-60 (RQAGR), Asp-105, Tyr-180, Ser-235, and His-348.

It belongs to the uroporphyrinogen decarboxylase family. As to quaternary structure, homodimer.

It is found in the cytoplasm. It catalyses the reaction uroporphyrinogen III + 4 H(+) = coproporphyrinogen III + 4 CO2. It participates in porphyrin-containing compound metabolism; protoporphyrin-IX biosynthesis; coproporphyrinogen-III from 5-aminolevulinate: step 4/4. Functionally, catalyzes the decarboxylation of four acetate groups of uroporphyrinogen-III to yield coproporphyrinogen-III. The chain is Uroporphyrinogen decarboxylase from Frankia casuarinae (strain DSM 45818 / CECT 9043 / HFP020203 / CcI3).